Here is a 1217-residue protein sequence, read N- to C-terminus: ATP-dependent RNA helicase DHX30 (1217 aa).

Residues Asp-15 and Ser-29 each carry the phosphoserine modification. A DRBM domain is found at 76 to 144 (PKNLLNSVIG…QAAAAACQLF (69 aa)). Positions 176 to 223 (WWRPEPTMPPTSWRQLNPENIRPGGPAGLSRSLGREEEEDEEEELEEG) are disordered. Residues 211 to 223 (EEEEDEEEELEEG) are compositionally biased toward acidic residues. Ser-249 and Ser-403 each carry phosphoserine. In terms of domain architecture, Helicase ATP-binding spans 467 to 635 (LSAIEQHPVV…FGGCPVIKVP (169 aa)). ATP is bound at residue 480-487 (GDTGCGKT). Residues 582–585 (DEVH) carry the DEAH box motif. The Helicase C-terminal domain occupies 677-850 (LVTDLVLHID…NLVLQAKIHM (174 aa)).

Belongs to the DEAD box helicase family. DEAH subfamily. Identified in a complex with TFAM and SSBP1. Interacts (via N-terminus) with ZC3HAV1 (via N-terminal domain) in an RNA-independent manner. Found in a complex with GRSF1, DDX28, FASTKD2 and FASTKD5. In terms of processing, phosphorylated on Ser-15. As to expression, expressed in the heart, brain, spleen, lung, liver, skeletal muscle, kidney, and testis. Expression is strongest in the testis and brain, while the lowest levels of expression are found in the spleen and lung.

It localises to the cytoplasm. It is found in the mitochondrion. The protein resides in the mitochondrion matrix. Its subcellular location is the mitochondrion nucleoid. The enzyme catalyses ATP + H2O = ADP + phosphate + H(+). Its function is as follows. RNA-dependent helicase. Plays an important role in the assembly of the mitochondrial large ribosomal subunit. Required for optimal function of the zinc-finger antiviral protein ZC3HAV1. Associates with mitochondrial DNA. Involved in nervous system development and differentiation through its involvement in the up-regulation of a number of genes which are required for neurogenesis, including GSC, NCAM1, neurogenin, and NEUROD. This Mus musculus (Mouse) protein is ATP-dependent RNA helicase DHX30 (Dhx30).